Here is a 117-residue protein sequence, read N- to C-terminus: cAMP-regulated phosphoprotein 19-B (117 aa).

A compositionally biased stretch (basic and acidic residues) spans 1 to 37; it reads MSRDNQEIKAPEESSAEEQKEMDDKVTSPEKAEEIKL. The tract at residues 1–54 is disordered; that stretch reads MSRDNQEIKAPEESSAEEQKEMDDKVTSPEKAEEIKLKSRYPNIGPKPGGSDFL. Position 28 is a phosphoserine; by CDK2 (Ser-28). Ser-67 carries the phosphoserine; by GWL modification. Positions 77-117 are disordered; that stretch reads MKNKQLPTAAPDKTEVTGDHIPTPQDLPQRKPSLVASKLAG. Residue Thr-99 is modified to Phosphothreonine; by CDK2. Residue Ser-109 is modified to Phosphoserine; by PKA.

The protein belongs to the endosulfine family. As to quaternary structure, interacts (when phosphorylated at Ser-67) with ppp2r2d. In terms of processing, phosphorylation at Ser-67 by gwl during mitosis is essential for interaction with ppp2r2d (PR55-delta) and subsequent inactivation of PP2A.

It is found in the cytoplasm. Protein phosphatase inhibitor that specifically inhibits protein phosphatase 2A (PP2A) during mitosis. When phosphorylated at Ser-67 during mitosis, specifically interacts with ppp2r2d (PR55-delta) and inhibits its activity, leading to inactivation of PP2A, an essential condition to keep cyclin-B1-CDK1 activity high during M phase. This chain is cAMP-regulated phosphoprotein 19-B (arpp19-b), found in Xenopus laevis (African clawed frog).